We begin with the raw amino-acid sequence, 379 residues long: Succinyl-diaminopimelate desuccinylase (379 aa).

Residue H70 participates in Zn(2+) binding. D72 is an active-site residue. Residue D103 coordinates Zn(2+). The active-site Proton acceptor is E137. Residues E138, E166, and H352 each coordinate Zn(2+).

Belongs to the peptidase M20A family. DapE subfamily. As to quaternary structure, homodimer. Requires Zn(2+) as cofactor. Co(2+) is required as a cofactor.

The enzyme catalyses N-succinyl-(2S,6S)-2,6-diaminopimelate + H2O = (2S,6S)-2,6-diaminopimelate + succinate. It functions in the pathway amino-acid biosynthesis; L-lysine biosynthesis via DAP pathway; LL-2,6-diaminopimelate from (S)-tetrahydrodipicolinate (succinylase route): step 3/3. Its function is as follows. Catalyzes the hydrolysis of N-succinyl-L,L-diaminopimelic acid (SDAP), forming succinate and LL-2,6-diaminopimelate (DAP), an intermediate involved in the bacterial biosynthesis of lysine and meso-diaminopimelic acid, an essential component of bacterial cell walls. The protein is Succinyl-diaminopimelate desuccinylase of Burkholderia ambifaria (strain ATCC BAA-244 / DSM 16087 / CCUG 44356 / LMG 19182 / AMMD) (Burkholderia cepacia (strain AMMD)).